The following is a 204-amino-acid chain: Glycerol-3-phosphate acyltransferase (204 aa).

Helical transmembrane passes span 6-26 (YIII…YIVA), 80-100 (LVGI…VAGH), 122-142 (LAVN…VVAI), 144-164 (KYVS…MIMV), and 168-188 (AGLI…RANI).

The protein belongs to the PlsY family. As to quaternary structure, probably interacts with PlsX.

It is found in the cell membrane. It catalyses the reaction an acyl phosphate + sn-glycerol 3-phosphate = a 1-acyl-sn-glycero-3-phosphate + phosphate. It participates in lipid metabolism; phospholipid metabolism. Catalyzes the transfer of an acyl group from acyl-phosphate (acyl-PO(4)) to glycerol-3-phosphate (G3P) to form lysophosphatidic acid (LPA). This enzyme utilizes acyl-phosphate as fatty acyl donor, but not acyl-CoA or acyl-ACP. The chain is Glycerol-3-phosphate acyltransferase from Clostridioides difficile (strain 630) (Peptoclostridium difficile).